The primary structure comprises 469 residues: Flap endonuclease 1-B (469 aa).

Residues 1 to 103 (MGIKGLTGLL…GVLSKRLERR (103 aa)) are N-domain. D32 is a binding site for Mg(2+). R45 and R69 together coordinate DNA. 5 residues coordinate Mg(2+): D85, E157, E159, D183, and D185. Positions 121–257 (DVDRFSRRTV…KSALKLIREY (137 aa)) are I-domain. E157 serves as a coordination point for DNA. DNA is bound by residues G235 and D237. Residue D237 coordinates Mg(2+). The disordered stretch occupies residues 274–354 (QKAAQAAVES…GGMQIPEEWP (81 aa)). Composition is skewed to acidic residues over residues 282–295 (ESDE…EDEP) and 302–317 (EMPD…EEEA). Positions 326–342 (PKKKKASSKTKEKRKGK) are enriched in basic residues. The interaction with PCNA stretch occupies residues 412–420 (QQGRLDGFF). Residues 424–469 (PKEKAAAPAPVGKAKGKGKIDAKAKGTKRKVDEKAESSAGKKPRKK) are disordered. The span at 441–459 (GKIDAKAKGTKRKVDEKAE) shows a compositional bias: basic and acidic residues.

Belongs to the XPG/RAD2 endonuclease family. FEN1 subfamily. As to quaternary structure, interacts with PCNA. Three molecules of FEN1 bind to one PCNA trimer with each molecule binding to one PCNA monomer. PCNA stimulates the nuclease activity without altering cleavage specificity. Mg(2+) is required as a cofactor. Phosphorylated. Phosphorylation upon DNA damage induces relocalization to the nuclear plasma.

It is found in the nucleus. The protein localises to the nucleolus. The protein resides in the nucleoplasm. Its subcellular location is the mitochondrion. Functionally, structure-specific nuclease with 5'-flap endonuclease and 5'-3' exonuclease activities involved in DNA replication and repair. During DNA replication, cleaves the 5'-overhanging flap structure that is generated by displacement synthesis when DNA polymerase encounters the 5'-end of a downstream Okazaki fragment. It enters the flap from the 5'-end and then tracks to cleave the flap base, leaving a nick for ligation. Also involved in the long patch base excision repair (LP-BER) pathway, by cleaving within the apurinic/apyrimidinic (AP) site-terminated flap. Acts as a genome stabilization factor that prevents flaps from equilibrating into structures that lead to duplications and deletions. Also possesses 5'-3' exonuclease activity on nicked or gapped double-stranded DNA, and exhibits RNase H activity. Also involved in replication and repair of rDNA and in repairing mitochondrial DNA. The protein is Flap endonuclease 1-B of Laccaria bicolor (strain S238N-H82 / ATCC MYA-4686) (Bicoloured deceiver).